A 1442-amino-acid chain; its full sequence is MRSRRLLSAAHLLCLCAVALAAPGSRFLVTAPGIIRPGANVTIGVDLLENSPPQVLVKAQVFKIASNKSRSILEAEGVFHRGHFKTLVLPALPLSSADKIYELHINGQSENEIVFSNRTRLTFESKSISVLIQTDKAFYKPKQEVKFRVLTLCSDLKPYRTSVDIFIKDPKSNVIQQWFSQKGDLGVVSKTFQLSSNPIFGDWSIQVQVNDQQYYQSFQVLEYVLPKFEVTVQTPLYCSLKSKQLNGSVIAKYTYGKPVKGSLSLTFLPLSFWGKKKNITKSFEINGFANFSFDNYEMKKVMNLKPLTDVSEGSYENVDPSFPGPAEIIATVTESLTGISRMASTNVFFKQHDYIIEIFDYTTVLKPSLNFTATVKVSRSDGNQLTPEEIENDLVTVVTQRKNNHPESQRDQEMDYIQTVNYTIPQNGIIKIEFPVMSISGELQLKAYFLDGTSSVTVHSMFTSPSKTYIQLKTRDEYIKVGSPFDLMVSGNRQFKDLSYMVISKGQLVAAGKQSSRTFSLTPEASWAPKACIIAYYIAEDGEIINDILKIPVQLVFENKVKLFWSKPTVKPSDKVSLRISATQSDSLVGIVAVDKSVTLMENSNSITMETMVHELELYNTEYYLGMFMNSFAVFQECGLWVLTDATLIRDSIDEVYDTEEYSERFAEENEANLVDFEDASSVNNVHVRKNFPETWIWLDAYMGSKIYEEFEVTVPDSITSWVASAFVISEDLGFGLTTVPAELQAFQPFFLFLNLPYSVIRGEEFALEVSIVNYLKDTIKVVILIEESDSFDILMTSNDTNGTIYRKTVQVPRDNGVTLVFPIKPTHLGEIPITVTAASPTASDAVTQTIVVKPEGIEKSYSKSVLLDLTDSNVESKQQSMRFSFPPDTVIGSERVQITAIGDILGSSINGLSSLIRMPYGCGEQNMIYFAPNIYILDYLTKQKQLTVNLKEKALSYMRQGYQRELLYQREDGSFSAFGDIDSSGSTWLSAFVLRCFLEADYYIDIDQDVLHRTYTWLNAHKKFNGEFWEPGRVIHSELQGGTKSPVTLTAYIVTSVLGYKKYQPNIDVQDSIKFLEFEFSRGISDNYTLAIISYALSTVGSPKAEEALNLLMQRSEKEGDTQFWLSSGPALSGSWQPRSVDIEIAAYALLAHTLHHVSEGIPVMRWLIQQRNSLGGFVSTQDTVVALKALSEFSALVHKENTDIQLTVTGPGIPRSIHFRIDSQNLFLLHQEELHALDPITVNVSAHGSGFAICQLNVDYNVKGSGSSKRRRSTENQEVFDLDVIVNNEDDISHLNLNVCTSHLGSERTGMVLMEVNLLSGFSASSDSIPLSETLKKVEYDNGKLNLYLDSVNESQFCVNIPTVRDYKVSNIRDGSVSVMDYYEPRRQAVRSYNTQVKLSSCYLSPDTNCKSHTDGATDSLRRSSSLLVFCSVLLYFVQH.

Positions 1-21 are cleaved as a signal peptide; the sequence is MRSRRLLSAAHLLCLCAVALA. N-linked (GlcNAc...) asparagine glycans are attached at residues Asn-67, Asn-117, Asn-246, Asn-278, Asn-370, and Asn-421. Positions 595-704 are bait region (approximate); that stretch reads DKSVTLMENS…TWIWLDAYMG (110 aa). Residues 923–926 constitute a cross-link (isoglutamyl cysteine thioester (Cys-Gln)); sequence CGEQ. An N-linked (GlcNAc...) asparagine glycan is attached at Asn-1088. A lipid anchor (GPI-anchor amidated alanine) is attached at Ala-1419. Positions 1420-1442 are cleaved as a propeptide — removed in mature form; it reads TDSLRRSSSLLVFCSVLLYFVQH.

It belongs to the protease inhibitor I39 (alpha-2-macroglobulin) family. In terms of assembly, heterodimer; disulfide-linked. Interacts with TGFB1 and TGFBR1. Forms a heteromeric complex with TGFBR1, TGFBR2 and TGFBR3 in a ligand-independent manner. N-glycosylated. In terms of processing, 2 forms of 150 (p150) and 120 kDa (p120) exist due to proteolytic degradation from a 180 kDa form.

It is found in the cell membrane. Its function is as follows. Modulates negatively TGFB1 signaling in keratinocytes. In Mus musculus (Mouse), this protein is CD109 antigen (Cd109).